The sequence spans 237 residues: Proteasome subunit alpha type-5 (237 aa).

The protein belongs to the peptidase T1A family. As to quaternary structure, the 26S proteasome consists of a 20S proteasome core and two 19S regulatory subunits. The 20S proteasome core is composed of 28 subunits that are arranged in four stacked rings, resulting in a barrel-shaped structure. The two end rings are each formed by seven alpha subunits, and the two central rings are each formed by seven beta subunits. The catalytic chamber with the active sites is on the inside of the barrel.

It is found in the cytoplasm. Its subcellular location is the nucleus. The proteasome is a multicatalytic proteinase complex which is characterized by its ability to cleave peptides with Arg, Phe, Tyr, Leu, and Glu adjacent to the leaving group at neutral or slightly basic pH. The proteasome has an ATP-dependent proteolytic activity. The protein is Proteasome subunit alpha type-5 (PAE1) of Oryza sativa subsp. japonica (Rice).